A 337-amino-acid chain; its full sequence is Ribosomal RNA small subunit methyltransferase H (337 aa).

S-adenosyl-L-methionine-binding positions include 36–38 (GGH), aspartate 56, phenylalanine 82, aspartate 100, and glutamine 107. Positions 317-337 (RRSGRIPNPQSPIPASQGDAR) are disordered.

The protein belongs to the methyltransferase superfamily. RsmH family.

It localises to the cytoplasm. The enzyme catalyses cytidine(1402) in 16S rRNA + S-adenosyl-L-methionine = N(4)-methylcytidine(1402) in 16S rRNA + S-adenosyl-L-homocysteine + H(+). Functionally, specifically methylates the N4 position of cytidine in position 1402 (C1402) of 16S rRNA. The protein is Ribosomal RNA small subunit methyltransferase H of Xanthomonas oryzae pv. oryzae (strain KACC10331 / KXO85).